The sequence spans 554 residues: Glutamine--tRNA ligase (554 aa).

Residues 33 to 43 (PEPNGYLHIGH) carry the 'HIGH' region motif. ATP contacts are provided by residues 34-36 (EPN) and 40-46 (HIGHAKS). 2 residues coordinate L-glutamine: Asp-66 and Tyr-210. Residues Thr-229, 259-260 (RL), and 267-269 (MSK) contribute to the ATP site. The short motif at 266–270 (VMSKR) is the 'KMSKS' region element.

This sequence belongs to the class-I aminoacyl-tRNA synthetase family. In terms of assembly, monomer.

It is found in the cytoplasm. It carries out the reaction tRNA(Gln) + L-glutamine + ATP = L-glutaminyl-tRNA(Gln) + AMP + diphosphate. The protein is Glutamine--tRNA ligase of Clostridioides difficile (strain 630) (Peptoclostridium difficile).